The primary structure comprises 141 residues: Large ribosomal subunit protein uL11 (141 aa).

It belongs to the universal ribosomal protein uL11 family. Part of the ribosomal stalk of the 50S ribosomal subunit. Interacts with L10 and the large rRNA to form the base of the stalk. L10 forms an elongated spine to which L12 dimers bind in a sequential fashion forming a multimeric L10(L12)X complex. One or more lysine residues are methylated.

Forms part of the ribosomal stalk which helps the ribosome interact with GTP-bound translation factors. The polypeptide is Large ribosomal subunit protein uL11 (Geobacter sulfurreducens (strain ATCC 51573 / DSM 12127 / PCA)).